The chain runs to 139 residues: Large ribosomal subunit protein uL16 (139 aa).

The span at 1–17 shows a compositional bias: basic residues; the sequence is MLIPRKVKHRKQHHPGR. A disordered region spans residues 1 to 24; the sequence is MLIPRKVKHRKQHHPGRTGHATGG.

Belongs to the universal ribosomal protein uL16 family. Part of the 50S ribosomal subunit.

Functionally, binds 23S rRNA and is also seen to make contacts with the A and possibly P site tRNAs. The protein is Large ribosomal subunit protein uL16 of Clavibacter michiganensis subsp. michiganensis (strain NCPPB 382).